A 268-amino-acid chain; its full sequence is N-formylmaleamate deformylase (268 aa).

One can recognise an AB hydrolase-1 domain in the interval 28-251 (ALILVPGITS…NAGHMIPWDD (224 aa)). Residues Ser-101, Glu-221, and His-245 each act as charge relay system in the active site.

It carries out the reaction N-formylmaleamate + H2O = maleamate + formate + H(+). It functions in the pathway cofactor degradation; nicotinate degradation. Functionally, deformylase that catalyzes the conversion of N-formylmaleamic acid to maleamate in the aerobic nicotinate degradation pathway. The polypeptide is N-formylmaleamate deformylase (nicD) (Pseudomonas putida (strain ATCC 47054 / DSM 6125 / CFBP 8728 / NCIMB 11950 / KT2440)).